Consider the following 91-residue polypeptide: Protein LURE 1.6 (91 aa).

The signal sequence occupies residues 1–20; that stretch reads MKLPFIFLITLLIFVSSCTS. 3 disulfide bridges follow: Cys-59-Cys-76, Cys-62-Cys-83, and Cys-66-Cys-85.

Belongs to the DEFL family. In terms of tissue distribution, expressed in the pistil. Detected in the synergid cells.

The protein resides in the secreted. In terms of biological role, pollen tube attractants guiding pollen tubes to the ovular micropyle. This is Protein LURE 1.6 from Arabidopsis thaliana (Mouse-ear cress).